The following is a 65-amino-acid chain: Small ribosomal subunit protein eS27 (65 aa).

4 residues coordinate Zn(2+): Cys-20, Cys-23, Cys-39, and Cys-42. A C4-type zinc finger spans residues 20-42 (CIDCGNEQIVFSHPATRVRCNVC).

It belongs to the eukaryotic ribosomal protein eS27 family. In terms of assembly, part of the 30S ribosomal subunit. Zn(2+) is required as a cofactor.

The sequence is that of Small ribosomal subunit protein eS27 from Pyrococcus abyssi (strain GE5 / Orsay).